The following is a 393-amino-acid chain: S-adenosylmethionine synthase 1 (393 aa).

Mg(2+) is bound at residue Glu-9. His-15 provides a ligand contact to ATP. Glu-43 contacts K(+). L-methionine contacts are provided by Glu-56 and Gln-99. ATP-binding positions include 167–169 (DGK), 235–238 (SGRF), Asp-246, 252–253 (RK), Ala-269, Lys-273, and Lys-277. Asp-246 serves as a coordination point for L-methionine. Residue Lys-277 coordinates L-methionine.

It belongs to the AdoMet synthase family. In terms of assembly, homotetramer. The cofactor is Mn(2+). It depends on Mg(2+) as a cofactor. Requires Co(2+) as cofactor. K(+) is required as a cofactor.

The protein resides in the cytoplasm. The catalysed reaction is L-methionine + ATP + H2O = S-adenosyl-L-methionine + phosphate + diphosphate. Its pathway is amino-acid biosynthesis; S-adenosyl-L-methionine biosynthesis; S-adenosyl-L-methionine from L-methionine: step 1/1. In terms of biological role, catalyzes the formation of S-adenosylmethionine from methionine and ATP. The reaction comprises two steps that are both catalyzed by the same enzyme: formation of S-adenosylmethionine (AdoMet) and triphosphate, and subsequent hydrolysis of the triphosphate. This Solanum tuberosum (Potato) protein is S-adenosylmethionine synthase 1 (METK1).